We begin with the raw amino-acid sequence, 455 residues long: Probable glycine dehydrogenase (decarboxylating) subunit 1 (455 aa).

Belongs to the GcvP family. N-terminal subunit subfamily. In terms of assembly, the glycine cleavage system is composed of four proteins: P, T, L and H. In this organism, the P 'protein' is a heterodimer of two subunits.

It catalyses the reaction N(6)-[(R)-lipoyl]-L-lysyl-[glycine-cleavage complex H protein] + glycine + H(+) = N(6)-[(R)-S(8)-aminomethyldihydrolipoyl]-L-lysyl-[glycine-cleavage complex H protein] + CO2. Functionally, the glycine cleavage system catalyzes the degradation of glycine. The P protein binds the alpha-amino group of glycine through its pyridoxal phosphate cofactor; CO(2) is released and the remaining methylamine moiety is then transferred to the lipoamide cofactor of the H protein. This Francisella philomiragia subsp. philomiragia (strain ATCC 25017 / CCUG 19701 / FSC 153 / O#319-036) protein is Probable glycine dehydrogenase (decarboxylating) subunit 1.